The following is a 335-amino-acid chain: Magnesium-protoporphyrin IX monomethyl ester [oxidative] cyclase (335 aa).

The protein belongs to the AcsF family. Requires Fe cation as cofactor.

Its subcellular location is the plastid. It is found in the chloroplast. The catalysed reaction is Mg-protoporphyrin IX 13-monomethyl ester + 3 NADPH + 3 O2 + 2 H(+) = 3,8-divinyl protochlorophyllide a + 3 NADP(+) + 5 H2O. It participates in porphyrin-containing compound metabolism; chlorophyll biosynthesis (light-independent). Its function is as follows. Catalyzes the formation of the isocyclic ring in chlorophyll biosynthesis. Mediates the cyclase reaction, which results in the formation of divinylprotochlorophyllide (Pchlide) characteristic of all chlorophylls from magnesium-protoporphyrin IX 13-monomethyl ester (MgPMME). The sequence is that of Magnesium-protoporphyrin IX monomethyl ester [oxidative] cyclase from Cyanidioschyzon merolae (strain NIES-3377 / 10D) (Unicellular red alga).